Reading from the N-terminus, the 988-residue chain is Protein argonaute 10 (988 aa).

The segment covering 1–11 (MPIRQMKDSSE) has biased composition (basic and acidic residues). Residues 1–103 (MPIRQMKDSS…PPSQTTSSAV (103 aa)) form a disordered region. Residues 41–57 (PVTVTTPATVTQSQASS) are compositionally biased toward low complexity. Residues 64–73 (NRSRRRNRGG) show a composition bias toward basic residues. The PAZ domain occupies 338–451 (PVIEFVAQLL…LPMEACKIVE (114 aa)). The Piwi domain maps to 625–946 (LLLAILPDNN…AAFRARFYLE (322 aa)).

Belongs to the argonaute family. Ago subfamily. Interacts with GATA18/HAN and KNAT1/BP. Interacts with RICE1 and RICE2 that act as cofactors. In terms of tissue distribution, expressed in roots, stems, leaves, developing embryo, siliques, inflorescences, provascular tissue, shoot apical meristem (SAM) and adaxial (upper) sides of lateral organ primordia. Observed in the floral meristem, the adaxial side of sepal primordia, and the provascular tissue.

It is found in the cytoplasm. In terms of biological role, involved in RNA-mediated post-transcriptional gene silencing (PTGS). Main component of the RNA-induced silencing complex (RISC) that binds to a short guide RNA such as a microRNA (miRNA) or small interfering RNA (siRNA). RISC uses the mature miRNA or siRNA as a guide for slicer-directed cleavage of homologous mRNAs to repress gene expression. Required for reliable formation of primary and axillary shoot apical meristems. Specifies leaf adaxial identity by repressing the miR165 and miR166 microRNAs in the embryonic shoot apex, in the shoot apical meristem (SAM) and leaf. Represses the microRNA miR398 which targets CCS1 chaperone mRNAs for translational inhibition. Acts as a negative regulator of AGO1 protein level. Like AGO1, is required for stem cell function and organ polarity. Unlike AGO1, is not subjected to small RNA-mediated repression itself. Essential for multiple processes in development. Coregulates, with GATA18/HAN, the shoot apical meristem (SAM) organization. The sequence is that of Protein argonaute 10 from Arabidopsis thaliana (Mouse-ear cress).